Consider the following 267-residue polypeptide: Thymidylate synthase (267 aa).

Arginine 24 is a dUMP binding site. Histidine 54 is a binding site for (6R)-5,10-methylene-5,6,7,8-tetrahydrofolate. Residue 129–130 participates in dUMP binding; sequence RR. The active-site Nucleophile is the cysteine 149. DUMP contacts are provided by residues 169–172, asparagine 180, and 210–212; these read RSAD and HIY. Aspartate 172 contributes to the (6R)-5,10-methylene-5,6,7,8-tetrahydrofolate binding site. Residue alanine 266 coordinates (6R)-5,10-methylene-5,6,7,8-tetrahydrofolate.

The protein belongs to the thymidylate synthase family. Bacterial-type ThyA subfamily. In terms of assembly, homodimer.

Its subcellular location is the cytoplasm. The catalysed reaction is dUMP + (6R)-5,10-methylene-5,6,7,8-tetrahydrofolate = 7,8-dihydrofolate + dTMP. The protein operates within pyrimidine metabolism; dTTP biosynthesis. Functionally, catalyzes the reductive methylation of 2'-deoxyuridine-5'-monophosphate (dUMP) to 2'-deoxythymidine-5'-monophosphate (dTMP) while utilizing 5,10-methylenetetrahydrofolate (mTHF) as the methyl donor and reductant in the reaction, yielding dihydrofolate (DHF) as a by-product. This enzymatic reaction provides an intracellular de novo source of dTMP, an essential precursor for DNA biosynthesis. The chain is Thymidylate synthase from Arthrobacter sp. (strain FB24).